We begin with the raw amino-acid sequence, 231 residues long: Ribosomal RNA small subunit methyltransferase G (231 aa).

Residues glycine 92, leucine 97, 143-144 (VE), and arginine 162 each bind S-adenosyl-L-methionine.

Belongs to the methyltransferase superfamily. RNA methyltransferase RsmG family.

The protein localises to the cytoplasm. The catalysed reaction is guanosine(527) in 16S rRNA + S-adenosyl-L-methionine = N(7)-methylguanosine(527) in 16S rRNA + S-adenosyl-L-homocysteine. Functionally, specifically methylates the N7 position of guanine in position 527 of 16S rRNA. This is Ribosomal RNA small subunit methyltransferase G from Burkholderia thailandensis (strain ATCC 700388 / DSM 13276 / CCUG 48851 / CIP 106301 / E264).